The following is a 302-amino-acid chain: Acetaldehyde dehydrogenase (302 aa).

12–15 (SGNI) is an NAD(+) binding site. Cys127 serves as the catalytic Acyl-thioester intermediate. NAD(+)-binding positions include 158 to 166 (SAGPGTRQN) and Asn276.

This sequence belongs to the acetaldehyde dehydrogenase family.

It carries out the reaction acetaldehyde + NAD(+) + CoA = acetyl-CoA + NADH + H(+). The protein is Acetaldehyde dehydrogenase (nahO) of Geobacillus genomosp. 3.